A 246-amino-acid chain; its full sequence is Mast cell protease 1 (246 aa).

The N-terminal stretch at 1–18 (MQALLFLMALLLPSGAGA) is a signal peptide. A propeptide spans 19 to 20 (EE) (activation peptide). The region spanning 21–244 (IIGGVEARPH…YVPWIKTVIN (224 aa)) is the Peptidase S1 domain. Cys50 and Cys66 are disulfide-bonded. Residue His65 is the Charge relay system of the active site. Asn102 carries an N-linked (GlcNAc...) asparagine glycan. Asp109 acts as the Charge relay system in catalysis. Cystine bridges form between Cys143-Cys208 and Cys174-Cys187. The active-site Charge relay system is the Ser202.

It belongs to the peptidase S1 family. Granzyme subfamily. As to expression, mucosal mast cells.

It is found in the secreted. The protein resides in the cytoplasmic granule. Its function is as follows. Has a chymotrypsin-like activity. The protein is Mast cell protease 1 (Mcpt1) of Mus musculus (Mouse).